The primary structure comprises 716 residues: Cyclic nucleotide-gated ion channel 1 (716 aa).

At 1–97 (MNFRQEKFVR…QGPFLQRWNK (97 aa)) the chain is on the cytoplasmic side. Residues 98–118 (IFVLACIIAVSLDPLFFYVPI) form a helical membrane-spanning segment. Over 119–132 (IDDAKKCLGIDKKM) the chain is Extracellular. A helical transmembrane segment spans residues 133-153 (EITASVLRSFTDVFYVLHIIF). Over 154–187 (QFRTGFIAPSSRVFGRGVLVEDKREIAKRYLSSH) the chain is Cytoplasmic. Residues 188–208 (FIIDILAVLPLPQMVILIIIP) form a helical membrane-spanning segment. Residues 209–220 (HMRGSSSLNTKN) are Extracellular-facing. The helical transmembrane segment at 221–241 (MLKFIVFFQYIPRFIRIYPLY) threads the bilayer. Topologically, residues 242–259 (KEVTRTSGILTETAWAGA) are cytoplasmic. The helical transmembrane segment at 260 to 280 (AFNLFLYMLASHVFGAFWYLF) threads the bilayer. At 281–379 (SIERETVCWK…GQNLKTSTYI (99 aa)) the chain is on the extracellular side. A helical transmembrane segment spans residues 380–400 (WEICFAVFISIAGLVLFSFLI). Over 401-716 (GNMQTYLQST…PAEPDFNSDD (316 aa)) the chain is Cytoplasmic. A nucleoside 3',5'-cyclic phosphate-binding positions include 486–610 (MFEK…SKQL) and Glu-557. A calmodulin-binding region spans residues 602–617 (FRRLHSKQLRHTFRYY). The 30-residue stretch at 622-651 (KTWAACFIQAAWRRYIKKKLEESLKEEENR) folds into the IQ domain. The tract at residues 689–716 (SVRKPRMPERMPPMLLQKPAEPDFNSDD) is disordered.

The protein belongs to the cyclic nucleotide-gated cation channel (TC 1.A.1.5) family. Homotetramer or heterotetramer (Potential). Binds calmodulin-2/3/5 with a higher affinity than calmodulin-1/4. As to expression, expressed in the whole plant but only weakly in roots.

The protein resides in the cell membrane. Its function is as follows. Acts as a cyclic nucleotide-gated ion channel. Can be activated by cyclic AMP which leads to an opening of the cation channel. May be responsible for cAMP-induced calcium entry in cells and thus should be involved in the calcium signal transduction. Could transport K(+), Na(+) and Pb(2+). This Arabidopsis thaliana (Mouse-ear cress) protein is Cyclic nucleotide-gated ion channel 1 (CNGC1).